Here is a 325-residue protein sequence, read N- to C-terminus: Protein UL76 (325 aa).

The segment at 222–286 (ARASAVAGGR…VRGGGAVEPA (65 aa)) is disordered. Residues 247 to 258 (GPGAQTVSASGA) show a composition bias toward low complexity.

Belongs to the herpesviridae UL24 family.

It localises to the virion. Its subcellular location is the host cytoplasm. It is found in the host nucleus. The protein localises to the host nucleolus. The protein resides in the host Golgi apparatus. Its function is as follows. May participate in nuclear egress of viral particles. Plays a role in the dispersal of several host nucleolar proteins including NCL/nucleolin and NPM1. Since deletion of host NCL/nucleolin negatively impact on nuclear egress, UL76 supposedly acts on this process through its effect on host nucleoli. Induces cell cycle arrest in host cells at the G2/M phase following by apoptosis. The mechanism involves the inhibition of host mitotic complex cyclinB/CDK1. The chain is Protein UL76 (UL76) from Human cytomegalovirus (strain Merlin) (HHV-5).